The primary structure comprises 119 residues: Large ribosomal subunit protein bL19 (119 aa).

It belongs to the bacterial ribosomal protein bL19 family.

Functionally, this protein is located at the 30S-50S ribosomal subunit interface and may play a role in the structure and function of the aminoacyl-tRNA binding site. The chain is Large ribosomal subunit protein bL19 from Leuconostoc citreum (strain KM20).